The following is a 274-amino-acid chain: NAD-dependent protein deacetylase (274 aa).

In terms of domain architecture, Deacetylase sirtuin-type spans 1 to 274 (MDSRMSDLQA…CDEVLAEVVS (274 aa)). NAD(+)-binding positions include 26–46 (GAGC…GQWK) and 104–107 (QNVD). Histidine 122 serves as the catalytic Proton acceptor. 4 residues coordinate Zn(2+): cysteine 130, cysteine 133, cysteine 181, and cysteine 184. Residues 221–223 (GSS), 247–249 (NLG), and cysteine 265 each bind NAD(+).

This sequence belongs to the sirtuin family. Class II subfamily. Zn(2+) serves as cofactor.

It is found in the cytoplasm. The catalysed reaction is N(6)-acetyl-L-lysyl-[protein] + NAD(+) + H2O = 2''-O-acetyl-ADP-D-ribose + nicotinamide + L-lysyl-[protein]. Functionally, NAD-dependent protein deacetylase which modulates the activities of several enzymes which are inactive in their acetylated form. The chain is NAD-dependent protein deacetylase from Bordetella bronchiseptica (strain ATCC BAA-588 / NCTC 13252 / RB50) (Alcaligenes bronchisepticus).